The sequence spans 282 residues: MSNKIINLGSIEIANDKPFVLFGGMNVLESRDLAMSIAETYAEVTQKLGIPYVFKASFDKANRSSVNSYRGPGMEEGLKIFEEIKKTFNLPLITDVHETYQCAPVAEVVDIIQLPAFLARQTDLVVAMAKTGAIINVKKPQFLAPHEMRHIITKFNEAGNDEIILCERGSCFGYNNLVVDMLGMDEMKQSGYPVIFDATHALQRPGGRSDSAGGRRAQATELARSGMALGLAGLFIEAHPDPDNAKCDGPCALPLHQLENYLKQMKAIDDLVKSFEPIDTSK.

This sequence belongs to the KdsA family.

Its subcellular location is the cytoplasm. It catalyses the reaction D-arabinose 5-phosphate + phosphoenolpyruvate + H2O = 3-deoxy-alpha-D-manno-2-octulosonate-8-phosphate + phosphate. It participates in carbohydrate biosynthesis; 3-deoxy-D-manno-octulosonate biosynthesis; 3-deoxy-D-manno-octulosonate from D-ribulose 5-phosphate: step 2/3. Its pathway is bacterial outer membrane biogenesis; lipopolysaccharide biosynthesis. The polypeptide is 2-dehydro-3-deoxyphosphooctonate aldolase (Shewanella sp. (strain W3-18-1)).